The primary structure comprises 599 residues: Beta-(1--&gt;2)glucan export ATP-binding/permease protein NdvA (599 aa).

In terms of domain architecture, ABC transmembrane type-1 spans 21–301 (TITMCVASVL…ISAFINQTVT (281 aa)). The next 5 helical transmembrane spans lie at 22 to 42 (ITMC…PVLF), 55 to 75 (IFSP…AAVF), 156 to 176 (MRMS…GQLV), 248 to 268 (MAST…VTKG), and 276 to 296 (IAFI…SAFI). An ABC transporter domain is found at 335–569 (IVFDNVTFEF…GGRFSDLLRA (235 aa)). 368–375 (GPTGAGKT) is an ATP binding site.

This sequence belongs to the ABC transporter superfamily. Beta-(1--&gt;2)glucan exporter (TC 3.A.1.108.1) family. In terms of assembly, homodimer.

The protein resides in the cell inner membrane. It catalyses the reaction [(1-&gt;2)-beta-D-glucosyl](n)(in) + ATP + H2O = [(1-&gt;2)-beta-D-glucosyl](n)(out) + ADP + phosphate + H(+). In terms of biological role, involved in beta-(1--&gt;2)glucan export. Transmembrane domains (TMD) form a pore in the inner membrane and the ATP-binding domain (NBD) is responsible for energy generation. The sequence is that of Beta-(1--&gt;2)glucan export ATP-binding/permease protein NdvA from Brucella suis biovar 1 (strain 1330).